Consider the following 300-residue polypeptide: Ubiquitin carboxyl-terminal hydrolase 2 (300 aa).

The 219-residue stretch at serine 2–lysine 220 folds into the UCH catalytic domain. The active-site Nucleophile is cysteine 83. The active-site Proton donor is the histidine 159. A ULD domain is found at asparagine 261–alanine 290.

The protein belongs to the peptidase C12 family. Component of the 26S proteasome. Interacts with rpn10.

It localises to the nucleus. It catalyses the reaction Thiol-dependent hydrolysis of ester, thioester, amide, peptide and isopeptide bonds formed by the C-terminal Gly of ubiquitin (a 76-residue protein attached to proteins as an intracellular targeting signal).. Its function is as follows. Ubiquitin-protein hydrolase is involved both in the processing of ubiquitin precursors and of ubiquitinated proteins. This enzyme is a thiol protease that recognizes and hydrolyzes a peptide bond at the C-terminal glycine of ubiquitin. The polypeptide is Ubiquitin carboxyl-terminal hydrolase 2 (uch2) (Schizosaccharomyces pombe (strain 972 / ATCC 24843) (Fission yeast)).